The primary structure comprises 238 residues: Probable transcriptional regulatory protein SpyM51586 (238 aa).

It belongs to the TACO1 family. YeeN subfamily.

It localises to the cytoplasm. The chain is Probable transcriptional regulatory protein SpyM51586 from Streptococcus pyogenes serotype M5 (strain Manfredo).